The following is a 385-amino-acid chain: 8-amino-7-oxononanoate synthase (385 aa).

Arg21 is a binding site for substrate. 108–109 (GF) is a pyridoxal 5'-phosphate binding site. Position 133 (His133) interacts with substrate. Pyridoxal 5'-phosphate contacts are provided by Ser179, His207, and Thr233. N6-(pyridoxal phosphate)lysine is present on Lys236. Thr352 is a substrate binding site.

The protein belongs to the class-II pyridoxal-phosphate-dependent aminotransferase family. BioF subfamily. In terms of assembly, homodimer. It depends on pyridoxal 5'-phosphate as a cofactor.

The catalysed reaction is 6-carboxyhexanoyl-[ACP] + L-alanine + H(+) = (8S)-8-amino-7-oxononanoate + holo-[ACP] + CO2. Its pathway is cofactor biosynthesis; biotin biosynthesis. Its function is as follows. Catalyzes the decarboxylative condensation of pimeloyl-[acyl-carrier protein] and L-alanine to produce 8-amino-7-oxononanoate (AON), [acyl-carrier protein], and carbon dioxide. The polypeptide is 8-amino-7-oxononanoate synthase (Salmonella choleraesuis (strain SC-B67)).